The following is a 414-amino-acid chain: Serine hydroxymethyltransferase (414 aa).

(6S)-5,6,7,8-tetrahydrofolate contacts are provided by residues leucine 121 and 125–127 (GHL). Lysine 229 carries the post-translational modification N6-(pyridoxal phosphate)lysine.

The protein belongs to the SHMT family. As to quaternary structure, homodimer. It depends on pyridoxal 5'-phosphate as a cofactor.

The protein resides in the cytoplasm. The catalysed reaction is (6R)-5,10-methylene-5,6,7,8-tetrahydrofolate + glycine + H2O = (6S)-5,6,7,8-tetrahydrofolate + L-serine. The protein operates within one-carbon metabolism; tetrahydrofolate interconversion. It functions in the pathway amino-acid biosynthesis; glycine biosynthesis; glycine from L-serine: step 1/1. Catalyzes the reversible interconversion of serine and glycine with tetrahydrofolate (THF) serving as the one-carbon carrier. This reaction serves as the major source of one-carbon groups required for the biosynthesis of purines, thymidylate, methionine, and other important biomolecules. Also exhibits THF-independent aldolase activity toward beta-hydroxyamino acids, producing glycine and aldehydes, via a retro-aldol mechanism. This is Serine hydroxymethyltransferase from Polynucleobacter asymbioticus (strain DSM 18221 / CIP 109841 / QLW-P1DMWA-1) (Polynucleobacter necessarius subsp. asymbioticus).